A 440-amino-acid polypeptide reads, in one-letter code: Damage-control phosphatase ARMT1 (440 aa).

Mn(2+) is bound by residues D252 and N253. 252–253 (DN) lines the substrate pocket. S-adenosyl-L-methionine contacts are provided by E257 and D290. D290 serves as a coordination point for Mn(2+). Residues 366–370 (DLNYR) and K403 each bind substrate. Positions 400–403 (RTLK) match the Subfamily III RTxK motif motif.

Belongs to the damage-control phosphatase family. Sugar phosphate phosphatase III subfamily. Mn(2+) is required as a cofactor. The cofactor is Ni(2+). In terms of processing, automethylated.

It carries out the reaction beta-D-fructose 1-phosphate + H2O = D-fructose + phosphate. The catalysed reaction is beta-D-fructose 6-phosphate = dihydroxyacetone + D-glyceraldehyde 3-phosphate. The enzyme catalyses L-glutamyl-[protein] + S-adenosyl-L-methionine = [protein]-L-glutamate 5-O-methyl ester + S-adenosyl-L-homocysteine. Metal-dependent phosphatase that shows phosphatase activity against several substrates, including fructose-1-phosphate and fructose-6-phosphate. Its preference for fructose-1-phosphate, a strong glycating agent that causes DNA damage rather than a canonical yeast metabolite, suggests a damage-control function in hexose phosphate metabolism. Has also been shown to have O-methyltransferase activity that methylates glutamate residues of target proteins to form gamma-glutamyl methyl ester residues. Possibly methylates PCNA, suggesting it is involved in the DNA damage response. The protein is Damage-control phosphatase ARMT1 of Xenopus laevis (African clawed frog).